We begin with the raw amino-acid sequence, 473 residues long: Ribonuclease Y (473 aa).

The helical transmembrane segment at 4–24 (LIAFIILLILFVLLITIVPVV) threads the bilayer. The region spanning 158 to 218 (SLFNIDIIDE…IRREIARIVM (61 aa)) is the KH domain. The 94-residue stretch at 285–378 (ILSHSLEVAE…VKIVDTLSAA (94 aa)) folds into the HD domain.

The protein belongs to the RNase Y family.

It localises to the cell membrane. Endoribonuclease that initiates mRNA decay. In Ureaplasma parvum serovar 3 (strain ATCC 27815 / 27 / NCTC 11736), this protein is Ribonuclease Y.